We begin with the raw amino-acid sequence, 698 residues long: Elongation factor G (698 aa).

Residues 8 to 290 (ERYRNIGISA…AVIELLPSPT (283 aa)) form the tr-type G domain. Residues 17 to 24 (AHIDAGKT), 88 to 92 (DTPGH), and 142 to 145 (NKMD) each bind GTP.

This sequence belongs to the TRAFAC class translation factor GTPase superfamily. Classic translation factor GTPase family. EF-G/EF-2 subfamily.

It is found in the cytoplasm. Its function is as follows. Catalyzes the GTP-dependent ribosomal translocation step during translation elongation. During this step, the ribosome changes from the pre-translocational (PRE) to the post-translocational (POST) state as the newly formed A-site-bound peptidyl-tRNA and P-site-bound deacylated tRNA move to the P and E sites, respectively. Catalyzes the coordinated movement of the two tRNA molecules, the mRNA and conformational changes in the ribosome. The protein is Elongation factor G of Chromobacterium violaceum (strain ATCC 12472 / DSM 30191 / JCM 1249 / CCUG 213 / NBRC 12614 / NCIMB 9131 / NCTC 9757 / MK).